The following is a 249-amino-acid chain: MPRKFFVGGNFKMNGNAESTTSIIKNLNSANLDKSVEVVVSPPALYLLQAREVANKEIGVAAQNVFDKPNGAFTGEISVQQLREANIDWTILGHSERRVILKETDEFIARKTKAAIEGGLQVIFCIGETLEEREANKTIDVVTRQLNAAAKELSKEQWAKVVIAYEPVWAIGTGKVATTEQAQEVHSAIRKWLKDAISAEAAENTRIIYGGSVSEKNCKDLAKEADIDGFLVGGASLKPAFVDIVNARL.

Substrate is bound by residues N10 and K12. H94 acts as the Electrophile in catalysis. The active-site Proton acceptor is E166.

This sequence belongs to the triosephosphate isomerase family. As to quaternary structure, homodimer.

It catalyses the reaction D-glyceraldehyde 3-phosphate = dihydroxyacetone phosphate. The protein operates within carbohydrate biosynthesis; gluconeogenesis. It participates in carbohydrate degradation; glycolysis; D-glyceraldehyde 3-phosphate from glycerone phosphate: step 1/1. The polypeptide is Triosephosphate isomerase (tpiA) (Emericella nidulans (strain FGSC A4 / ATCC 38163 / CBS 112.46 / NRRL 194 / M139) (Aspergillus nidulans)).